The sequence spans 78 residues: Consomatin Te1 (78 aa).

A signal peptide spans 1–22; it reads MQTAYWMMVMMMVWITAPLSEG. A propeptide spanning residues 23–56 is cleaved from the precursor; the sequence is GQLNDVIRGLVPDNLAPQLVLQSLDSRRHPHGIR. Cys63 and Cys68 are oxidised to a cystine. D-tryptophan is present on Trp65. Pro69, Pro70, and Pro72 each carry 4-hydroxyproline. Residues 74–78 constitute a propeptide that is removed on maturation; that stretch reads RRLGS.

The protein belongs to the conotoxin C superfamily. Consomatin family. Expressed by the venom duct.

It is found in the secreted. Its function is as follows. Moderately activates human somatostatin receptors (SSTR) with a preferential activation of SSTR1 and SSTR4. In vivo, does not cause behavioral changes in mice within a few minutes of intracranial injection, but causes a progressive loss of movement thereafter. Four to five hours after injection, mice recover, even with the highest dose tested. Shows antinociception and antihyperalgesia activities in two mouse models of acute pain, most probably by acting outside the central nervous system. In Conus terebra (Sea snail), this protein is Consomatin Te1.